A 152-amino-acid chain; its full sequence is uncharacterized protein (152 aa).

Positions 127–152 (EKEKAERKAEKAKKNKKKSSTKTKKK) are disordered. Basic residues predominate over residues 136–152 (EKAKKNKKKSSTKTKKK).

The protein belongs to the mimivirus R546 family.

This is an uncharacterized protein from Sputnik virophage.